Here is a 481-residue protein sequence, read N- to C-terminus: G-protein coupled receptor 37-like 1 (481 aa).

The first 24 residues, 1 to 24 (MRWLWPLAVSLAVVLAVGPSEVSG), serve as a signal peptide directing secretion. Residues 25–134 (AATLSLGGHR…ESSYSAYAVM (110 aa)) are Extracellular-facing. Disordered stretches follow at residues 30-55 (LGGH…GPKE) and 76-107 (LQPT…TNLT). Positions 95–107 (TSESGQELRTNLT) are enriched in polar residues. Residue Asn105 is glycosylated (N-linked (GlcNAc...) asparagine). Residues 135–155 (LLALVVFAVGIVGNLSVMCIV) form a helical membrane-spanning segment. Residues 156–167 (WHSYYLKSAWNS) are Cytoplasmic-facing. The chain crosses the membrane as a helical span at residues 168-188 (ILASLALWDFLVLFFCLPIVI). Topologically, residues 189-205 (FNEITKQRLLGDVSCRA) are extracellular. Cysteines 203 and 286 form a disulfide. The chain crosses the membrane as a helical span at residues 206–226 (VPFMEVSSLGVTTFSLCALGI). The Cytoplasmic portion of the chain corresponds to 227-251 (DRFHVATSTLPKVRPIERCQSILAK). Residues 252–272 (LAVIWVGSMMLAVPELLLWQL) traverse the membrane as a helical segment. The Extracellular portion of the chain corresponds to 273 to 310 (AQEPTPTMGTVDSCIMKPSADLPESLYSLVMTYQNARM). A helical membrane pass occupies residues 311-331 (WWYFGCYFCLPILFTVTCQLV). Residues 332–360 (TWRVRGPPGRKPECRAGRHEQCESQLNST) lie on the Cytoplasmic side of the membrane. The helical transmembrane segment at 361 to 381 (VVGLTVVYAFCTLPENICNIV) threads the bilayer. Topologically, residues 382-398 (VAYLSTELTRQTLDLLG) are extracellular. The helical transmembrane segment at 399–419 (LINQFSTFFKGAITPVLLLCI) threads the bilayer. Topologically, residues 420–481 (CRPLGQAFLD…PPLLPLGTPC (62 aa)) are cytoplasmic. Residue Ser471 is modified to Phosphoserine. Thr479 is subject to Phosphothreonine.

This sequence belongs to the G-protein coupled receptor 1 family. Interacts with the PTCH1 receptor. Undergoes metalloprotease-mediated cleavage which reduces its constitutive activity. Post-translationally, ubiquitinated. As to expression, highly expressed in brain.

The protein resides in the cell membrane. The protein localises to the cell projection. Its subcellular location is the cilium membrane. In terms of biological role, G-protein coupled receptor. Has been shown to bind the neuroprotective and glioprotective factor prosaposin (PSAP), leading to endocytosis followed by an ERK phosphorylation cascade. However, other studies have shown that prosaposin does not increase activity. It has been suggested that GPR37L1 is a constitutively active receptor which signals through the guanine nucleotide-binding protein G(s) subunit alpha. Participates in the regulation of postnatal cerebellar development by modulating the Shh pathway. Regulates baseline blood pressure in females and protects against cardiovascular stress in males. Mediates inhibition of astrocyte glutamate transporters and reduction in neuronal N-methyl-D-aspartate receptor activity. This is G-protein coupled receptor 37-like 1 (Gpr37l1) from Rattus norvegicus (Rat).